The following is a 556-amino-acid chain: Carotenoid-cleaving dioxygenase, mitochondrial (556 aa).

4 residues coordinate Fe cation: histidine 203, histidine 263, histidine 334, and histidine 550.

It belongs to the carotenoid oxygenase family. Requires Fe(2+) as cofactor.

It is found in the mitochondrion. It carries out the reaction all-trans-beta-carotene + O2 = beta-ionone + all-trans-10'-apo-beta-carotenal. The enzyme catalyses 5-cis-lycopene + O2 = 5-cis-10'-apo-lycopenal + (3E,5E)-6,10-dimethylundeca-3,5,9-trien-2-one. It catalyses the reaction 13-cis-lycopene + O2 = 13-cis-10'-apo-lycopenal + (3E,5E)-6,10-dimethylundeca-3,5,9-trien-2-one. The catalysed reaction is lutein + O2 = (3R,6R)-hydroxy-alpha-ionone + (3R)-3-hydroxy-10'-apo-beta-carotenal. It carries out the reaction lutein + O2 = (3R,6R)-3-hydroxy-10'-apo-alpha-carotenal + (3R)-hydroxy-beta-ionone. The enzyme catalyses all-trans-zeaxanthin + 2 O2 = 4,9-dimethyldodeca-2,4,6,8,10-pentaenedial + 2 (3R)-hydroxy-beta-ionone. It catalyses the reaction all-trans-zeaxanthin + O2 = (3R)-3-hydroxy-10'-apo-beta-carotenal + (3R)-hydroxy-beta-ionone. The catalysed reaction is beta-cryptoxanthin + O2 = all-trans-10'-apo-beta-carotenal + (3R)-hydroxy-beta-ionone. It carries out the reaction all-trans-10'-apo-beta-carotenal + O2 = beta-ionone + 4,9-dimethyldodeca-2,4,6,8,10-pentaenedial. The enzyme catalyses (3R)-3-hydroxy-10'-apo-beta-carotenal + O2 = 4,9-dimethyldodeca-2,4,6,8,10-pentaenedial + (3R)-hydroxy-beta-ionone. It catalyses the reaction (3R,6R)-3-hydroxy-10'-apo-alpha-carotenal + O2 = (3R,6R)-hydroxy-alpha-ionone + 4,9-dimethyldodeca-2,4,6,8,10-pentaenedial. In terms of biological role, broad specificity mitochondrial dioxygenase that mediates the asymmetric oxidative cleavage of carotenoids. Cleaves carotenes (pure hydrocarbon carotenoids) such as all-trans-beta-carotene and lycopene as well as xanthophylls (oxygenated carotenoids) such as zeaxanthin, lutein and beta-cryptoxanthin at both the 9,10 and the 9',10' carbon-carbon double bond. Through its function in carotenoids metabolism regulates oxidative stress and the production of important signaling molecules. The sequence is that of Carotenoid-cleaving dioxygenase, mitochondrial from Macaca fascicularis (Crab-eating macaque).